The following is a 312-amino-acid chain: MEKLVIATRRSQLALWQSEYVKSRLLEHYPNMQIELQEFVTKGDKILDVPLAKIGGKGLFTKELEVAMLEGSAHLAVHSLKDVPTQFEDGLMLAAVTKRFDPRDAFLSNKYTSLEELPKGAIVGTTSLRRRMALKILRPDIELKDLRGNINTRIAKLNAGEYDAIILAATGIQKLGIENEVKYFSPISTDIMIPSMGQATLGIETTNDPKVLEILKVLNDNNAHIESTVERSFVDTLQGGCQVPIGVKATILDENSIRVQAIVGMPDGSEYISEDITADIEDYETIGQNLAQIFIDQGAKELLEKAEKVAFK.

S-(dipyrrolylmethanemethyl)cysteine is present on C241.

Belongs to the HMBS family. Monomer. Dipyrromethane serves as cofactor.

It catalyses the reaction 4 porphobilinogen + H2O = hydroxymethylbilane + 4 NH4(+). The protein operates within porphyrin-containing compound metabolism; protoporphyrin-IX biosynthesis; coproporphyrinogen-III from 5-aminolevulinate: step 2/4. Functionally, tetrapolymerization of the monopyrrole PBG into the hydroxymethylbilane pre-uroporphyrinogen in several discrete steps. In Aliarcobacter butzleri (strain RM4018) (Arcobacter butzleri), this protein is Porphobilinogen deaminase.